We begin with the raw amino-acid sequence, 174 residues long: Large ribosomal subunit protein uL10 (174 aa).

The protein belongs to the universal ribosomal protein uL10 family. As to quaternary structure, part of the ribosomal stalk of the 50S ribosomal subunit. The N-terminus interacts with L11 and the large rRNA to form the base of the stalk. The C-terminus forms an elongated spine to which L12 dimers bind in a sequential fashion forming a multimeric L10(L12)X complex.

In terms of biological role, forms part of the ribosomal stalk, playing a central role in the interaction of the ribosome with GTP-bound translation factors. The sequence is that of Large ribosomal subunit protein uL10 from Vesicomyosocius okutanii subsp. Calyptogena okutanii (strain HA).